Here is a 72-residue protein sequence, read N- to C-terminus: Translation initiation factor IF-1 (72 aa).

The S1-like domain occupies 1–72; that stretch reads MAKSDVIEME…SKGRIVYRAR (72 aa).

Belongs to the IF-1 family. Component of the 30S ribosomal translation pre-initiation complex which assembles on the 30S ribosome in the order IF-2 and IF-3, IF-1 and N-formylmethionyl-tRNA(fMet); mRNA recruitment can occur at any time during PIC assembly.

The protein localises to the cytoplasm. In terms of biological role, one of the essential components for the initiation of protein synthesis. Stabilizes the binding of IF-2 and IF-3 on the 30S subunit to which N-formylmethionyl-tRNA(fMet) subsequently binds. Helps modulate mRNA selection, yielding the 30S pre-initiation complex (PIC). Upon addition of the 50S ribosomal subunit IF-1, IF-2 and IF-3 are released leaving the mature 70S translation initiation complex. The polypeptide is Translation initiation factor IF-1 (Marinobacter nauticus (strain ATCC 700491 / DSM 11845 / VT8) (Marinobacter aquaeolei)).